The chain runs to 227 residues: ATP-dependent dethiobiotin synthetase BioD (227 aa).

Residue 13–18 (DIGKTY) coordinates ATP. Position 17 (Thr-17) interacts with Mg(2+). Lys-38 is a catalytic residue. Ser-42 is a substrate binding site. Residues Asp-55, 116-119 (EGSG), and 179-180 (NN) each bind ATP. Mg(2+) contacts are provided by Asp-55 and Glu-116.

The protein belongs to the dethiobiotin synthetase family. In terms of assembly, homodimer. It depends on Mg(2+) as a cofactor.

The protein resides in the cytoplasm. The enzyme catalyses (7R,8S)-7,8-diammoniononanoate + CO2 + ATP = (4R,5S)-dethiobiotin + ADP + phosphate + 3 H(+). Its pathway is cofactor biosynthesis; biotin biosynthesis; biotin from 7,8-diaminononanoate: step 1/2. Functionally, catalyzes a mechanistically unusual reaction, the ATP-dependent insertion of CO2 between the N7 and N8 nitrogen atoms of 7,8-diaminopelargonic acid (DAPA, also called 7,8-diammoniononanoate) to form a ureido ring. This chain is ATP-dependent dethiobiotin synthetase BioD, found in Clostridium botulinum (strain Alaska E43 / Type E3).